The following is a 222-amino-acid chain: Ribosomal RNA small subunit methyltransferase G (222 aa).

Positions 80, 85, and 149 each coordinate S-adenosyl-L-methionine.

It belongs to the methyltransferase superfamily. RNA methyltransferase RsmG family.

It is found in the cytoplasm. In terms of biological role, specifically methylates the N7 position of a guanine in 16S rRNA. The sequence is that of Ribosomal RNA small subunit methyltransferase G from Treponema pallidum (strain Nichols).